A 264-amino-acid polypeptide reads, in one-letter code: 3-methyl-2-oxobutanoate hydroxymethyltransferase (264 aa).

Residues Asp43 and Asp82 each contribute to the Mg(2+) site. 3-methyl-2-oxobutanoate contacts are provided by residues Asp43 to Ser44, Asp82, and Lys111. Position 113 (Glu113) interacts with Mg(2+). Residue Glu180 is the Proton acceptor of the active site.

Belongs to the PanB family. In terms of assembly, homodecamer; pentamer of dimers. Requires Mg(2+) as cofactor.

It localises to the cytoplasm. The catalysed reaction is 3-methyl-2-oxobutanoate + (6R)-5,10-methylene-5,6,7,8-tetrahydrofolate + H2O = 2-dehydropantoate + (6S)-5,6,7,8-tetrahydrofolate. The protein operates within cofactor biosynthesis; (R)-pantothenate biosynthesis; (R)-pantoate from 3-methyl-2-oxobutanoate: step 1/2. In terms of biological role, catalyzes the reversible reaction in which hydroxymethyl group from 5,10-methylenetetrahydrofolate is transferred onto alpha-ketoisovalerate to form ketopantoate. This Campylobacter fetus subsp. fetus (strain 82-40) protein is 3-methyl-2-oxobutanoate hydroxymethyltransferase.